The sequence spans 250 residues: MKIDIIGDVHGCLEELEELLFKLGYQIKNGTYQHSNNRQIVFVGDITDRGPDSIKVIKLVYQLVKEKLAYYIPGNHCNKLYRFFQGNKVMEKHGLETTTAEYRSLSKEKQNNIKHKFIELYERSPLYLHLKNINVIIAHAGIPEHLIGKKDKRTKTFVLYGDITGEFDTTGKPIRRDWAKHYHGDSWIVYGHTPVLEPRVVNHTINIDTGCVFGNKLTAYRFPEKEFVSVASRQPFIAEKFTDFNVSNEH.

The protein belongs to the PrpE family. It depends on Ni(2+) as a cofactor.

It catalyses the reaction P(1),P(4)-bis(5'-guanosyl) tetraphosphate + H2O = GMP + GTP + 2 H(+). Asymmetrically hydrolyzes Ap4p to yield AMP and ATP. In Oceanobacillus iheyensis (strain DSM 14371 / CIP 107618 / JCM 11309 / KCTC 3954 / HTE831), this protein is Bis(5'-nucleosyl)-tetraphosphatase PrpE [asymmetrical].